The sequence spans 428 residues: MASVSSSDQGPKTEAGCSGGGGGESSETVAASDQMLLYRGFKKAKKERGCTAKERISKMPPCTAGKRSSIYRGVTRHRWTGRYEAHLWDKSTWNQNQNKKGKQVYLGAYDDEEAAARAYDLAALKYWGPGTLINFPVTDYTRDLEEMQNLSREEYLASLRRYPFGRKSSGFSRGIAKYRGLQSRWDASASRMPGPEYFSNIHYGAGDDRGTEGDFLGSFCLERKIDLTGYIKWWGANKNRQPESSSKASEDANVEDAGTELKTLEHTSHATEPYKAPNLGVLCGTQRKEKEISSPSSSSALSILSQSPAFKSLEEKVLKIQESCNNENDENANRNIINMEKNNGKAIEKPVVSHGVALGGAAALSLQKSMYPLTSLLTAPLLTNYNTLDPLADPILWTPFLPSGSSLTSEVTKTETSCSTYSYLPQEK.

A compositionally biased stretch (polar residues) spans 1 to 10 (MASVSSSDQG). Residues 1 to 28 (MASVSSSDQGPKTEAGCSGGGGGESSET) form a disordered region. A DNA-binding region (AP2/ERF) is located at residues 70–136 (IYRGVTRHRW…WGPGTLINFP (67 aa)).

Belongs to the AP2/ERF transcription factor family. AP2 subfamily.

The protein localises to the nucleus. Its function is as follows. Probably acts as a transcriptional activator. Binds to the GCC-box pathogenesis-related promoter element. May be involved in the regulation of gene expression by stress factors and by components of stress signal transduction pathways. The chain is AP2-like ethylene-responsive transcription factor At2g41710 from Arabidopsis thaliana (Mouse-ear cress).